The chain runs to 278 residues: HTH-type transcriptional activator RhaS (278 aa).

Positions 174–272 (NQLLAWLEDH…DWSPRDIRQG (99 aa)) constitute an HTH araC/xylS-type domain. DNA-binding regions (H-T-H motif) lie at residues 191–212 (EEVA…KQQT) and 239–262 (VTDI…RREF).

In terms of assembly, binds DNA as a dimer.

The protein resides in the cytoplasm. Its function is as follows. Activates expression of the rhaBAD and rhaT operons. The protein is HTH-type transcriptional activator RhaS of Klebsiella pneumoniae (strain 342).